The sequence spans 55 residues: Large ribosomal subunit protein bL32 (55 aa).

The span at 1-19 (MAVPKFKKSRANTRARRSQ) shows a compositional bias: basic residues. Residues 1 to 22 (MAVPKFKKSRANTRARRSQWKA) form a disordered region.

This sequence belongs to the bacterial ribosomal protein bL32 family.

This chain is Large ribosomal subunit protein bL32, found in Corynebacterium urealyticum (strain ATCC 43042 / DSM 7109).